The following is a 263-amino-acid chain: Nicotinamide riboside transporter PnuC (263 aa).

At 1–40 (MQYGMDSFGLRGIPHQVFIKKKEGKIMSLAWWKRELFGGW) the chain is on the cytoplasmic side. A helical membrane pass occupies residues 41–61 (THFEAVWLLMFLGIQAVVFVF). A topological domain (periplasmic) is located at residue asparagine 62. Residues 63–83 (PDSWLASVAAVTGILCVVFVG) traverse the membrane as a helical segment. Residues 84-86 (KGK) lie on the Cytoplasmic side of the membrane. Residues 87-107 (ISNYLFGLISVSLYAYVSYTF) traverse the membrane as a helical segment. The Periplasmic segment spans residues 108 to 109 (KL). A helical membrane pass occupies residues 110–131 (YGEMMLNLLVYVPVQFVGFAMW). Glutamine 124 is a beta-nicotinamide D-riboside binding site. The Cytoplasmic segment spans residues 132–155 (RKHMALGETAETEEVKAKALTVRQ). The helical transmembrane segment at 156 to 177 (WLLVVAASVVGTSVYIEWLHHL) threads the bilayer. Residues 178–180 (GSA) lie on the Periplasmic side of the membrane. A helical membrane pass occupies residues 181 to 201 (LPTLDGVTVVVSIVAQVLMIL). A beta-nicotinamide D-riboside-binding site is contributed by glutamine 196. At 202 to 205 (RYRE) the chain is on the cytoplasmic side. Residues 206–226 (QWALWIVVNILTISLWAVAWF) form a helical membrane-spanning segment. Positions 210 and 214 each coordinate beta-nicotinamide D-riboside. At 227–232 (KNGETS) the chain is on the periplasmic side. A helical transmembrane segment spans residues 233 to 253 (LPLLLMYVMYLCNSVYGYINW). Tyrosine 242 provides a ligand contact to beta-nicotinamide D-riboside. Over 254–263 (TKLVKRHSGQ) the chain is Cytoplasmic.

The protein belongs to the nicotinamide ribonucleoside (NR) uptake permease (TC 4.B.1) family. Homotrimer.

It is found in the cell inner membrane. In terms of biological role, required for nicotinamide riboside transport across the inner membrane. This Neisseria mucosa (strain ATCC 25996 / DSM 4631 / NCTC 10774 / M26) protein is Nicotinamide riboside transporter PnuC.